The primary structure comprises 400 residues: MLKVEMLSTGDEVLHGQIVDTNAAWLADFFFHQGLPLSRRNTVGDNLDDLVTILRERSQHADVLIVNGGLGPTSDDLSALAAATAKGEGLVLHEAWLKEMERYFHERGRVMAPSNRKQAELPASAEFINNPVGTACGFAVQLNRCLMFFTPGVPSEFKVMVEHEILPRLRERFSLPQPPVCLRLTTFGRSESDLAQSLDTLQLPPGVTMGYRSSMPIIELKLTGPASEQQAMEKLWLDVKRVAGQSVIFEGTEGLPAQISRELQNRQFSLTLSEQFTGGLLALQLSRAGAPLLACEVVPSQEETLAQTAHWITERRANHFAGLALAVSGFENEHLNFALATPDGTFALRVRFSTTRYSLAIRQEVCAMMALNMLRRWLNGQDIASEHGWIEVVESMTLSV.

This sequence belongs to the CinA family.

The protein is CinA-like protein of Escherichia coli (strain K12 / MC4100 / BW2952).